Reading from the N-terminus, the 484-residue chain is tRNA sulfurtransferase (484 aa).

One can recognise a THUMP domain in the interval 63–167 (EAFADRLSCI…RENLYLVVNR (105 aa)). ATP is bound by residues 185 to 186 (LI), lysine 267, glycine 289, and glutamine 298. An intrachain disulfide couples cysteine 346 to cysteine 458. The Rhodanese domain occupies 406–484 (VNSNEVIIDV…GYENVKVYRP (79 aa)). Residue cysteine 458 is the Cysteine persulfide intermediate of the active site.

It belongs to the ThiI family.

It is found in the cytoplasm. It carries out the reaction [ThiI sulfur-carrier protein]-S-sulfanyl-L-cysteine + a uridine in tRNA + 2 reduced [2Fe-2S]-[ferredoxin] + ATP + H(+) = [ThiI sulfur-carrier protein]-L-cysteine + a 4-thiouridine in tRNA + 2 oxidized [2Fe-2S]-[ferredoxin] + AMP + diphosphate. It catalyses the reaction [ThiS sulfur-carrier protein]-C-terminal Gly-Gly-AMP + S-sulfanyl-L-cysteinyl-[cysteine desulfurase] + AH2 = [ThiS sulfur-carrier protein]-C-terminal-Gly-aminoethanethioate + L-cysteinyl-[cysteine desulfurase] + A + AMP + 2 H(+). It participates in cofactor biosynthesis; thiamine diphosphate biosynthesis. Its function is as follows. Catalyzes the ATP-dependent transfer of a sulfur to tRNA to produce 4-thiouridine in position 8 of tRNAs, which functions as a near-UV photosensor. Also catalyzes the transfer of sulfur to the sulfur carrier protein ThiS, forming ThiS-thiocarboxylate. This is a step in the synthesis of thiazole, in the thiamine biosynthesis pathway. The sulfur is donated as persulfide by IscS. The protein is tRNA sulfurtransferase of Shewanella sediminis (strain HAW-EB3).